Here is a 680-residue protein sequence, read N- to C-terminus: Dihydroxyacetone phosphate acyltransferase (680 aa).

A phosphoserine mark is found at serine 12 and serine 17. The short motif at 162 to 167 is the HXXXXD motif element; sequence HRSYID. Lysine 643 is modified (N6-acetyllysine). Residues 678–680 carry the Microbody targeting signal motif; that stretch reads AKL.

The protein belongs to the GPAT/DAPAT family. Part of a heterotrimeric complex composed of GNPAT, AGPS and a modified form of GNPAT.

Its subcellular location is the peroxisome membrane. It catalyses the reaction dihydroxyacetone phosphate + an acyl-CoA = a 1-acylglycerone 3-phosphate + CoA. It carries out the reaction dihydroxyacetone phosphate + hexadecanoyl-CoA = 1-hexadecanoylglycerone 3-phosphate + CoA. The protein operates within membrane lipid metabolism; glycerophospholipid metabolism. Dihydroxyacetonephosphate acyltransferase catalyzing the first step in the biosynthesis of plasmalogens, a subset of phospholipids that differ from other glycerolipids by having an alkyl chain attached through a vinyl ether linkage at the sn-1 position of the glycerol backbone, and which unique physical properties have an impact on various aspects of cell signaling and membrane biology. In Homo sapiens (Human), this protein is Dihydroxyacetone phosphate acyltransferase.